A 192-amino-acid polypeptide reads, in one-letter code: Ion-translocating oxidoreductase complex subunit A (192 aa).

6 helical membrane-spanning segments follow: residues 5–25 (ILLI…FLGL), 39–59 (VGMG…AYLV), 63–83 (ILIP…VIAV), 102–122 (LLGI…VALL), 134–154 (VVYG…FAAL), and 171–191 (SIAL…TGLV).

It belongs to the NqrDE/RnfAE family. The complex is composed of six subunits: RnfA, RnfB, RnfC, RnfD, RnfE and RnfG.

The protein localises to the cell inner membrane. Part of a membrane-bound complex that couples electron transfer with translocation of ions across the membrane. The chain is Ion-translocating oxidoreductase complex subunit A from Haemophilus influenzae (strain ATCC 51907 / DSM 11121 / KW20 / Rd).